The primary structure comprises 140 residues: Lymphocyte antigen 6H (140 aa).

Residues 1-25 form the signal peptide; sequence MLPAAMKGLGLALLAVLLCSAPAHG. Residues 26-91 enclose the UPAR/Ly6 domain; sequence LWCQDCTLTT…RHFFSDYLMG (66 aa). Disulfide bonds link C28–C52, C31–C40, C45–C73, and C77–C104. N36 is a glycosylation site (N-linked (GlcNAc...) asparagine). A lipid anchor (GPI-anchor amidated glycine) is attached at G115. Positions 116–140 are cleaved as a propeptide — removed in mature form; that stretch reads AGHSPWALAGGLLLSLGPALLWAGP.

In terms of assembly, interacts with CHRNA4 and CHRNA7.

The protein localises to the cell membrane. Functionally, believed to act as a modulator of nicotinic acetylcholine receptors (nAChRs) activity. In vitro inhibits alpha-3:beta-4-containing nAChRs maximum response. May play a role in the intracellular trafficking of alpha-7-containing nAChRs and may inhibit their expression at the cell surface. Seems to inhibit alpha-7/CHRNA7 signaling in hippocampal neurons. This Macaca fascicularis (Crab-eating macaque) protein is Lymphocyte antigen 6H (LY6H).